A 202-amino-acid chain; its full sequence is Protein U22 (202 aa).

2 consecutive transmembrane segments (helical) span residues 5–25 (GWSL…LHII) and 172–192 (FVYY…SCWF).

It is found in the host membrane. In Human herpesvirus 6B (strain Z29) (HHV-6 variant B), this protein is Protein U22 (U22).